The chain runs to 199 residues: Protein ZNRD2 (199 aa).

An N-acetylalanine modification is found at Ala-2. Zn(2+) is bound by residues Cys-53, Cys-56, Cys-70, and Cys-73. Residue Ser-94 is modified to Phosphoserine. Positions 100 to 125 (QLASASELPLGSRPAPQPPVPRPEHC) are disordered. Residues 173 to 194 (SLETSIQLCGLIRACAEALRSL) carry the Nuclear export signal motif.

In terms of assembly, homodimer. The cofactor is Zn(2+).

It is found in the cytoplasm. Functionally, might play a role in mitosis. Antigenic molecule. Could be a centromere-associated protein. May induce anti-centromere antibodies. In Homo sapiens (Human), this protein is Protein ZNRD2.